The chain runs to 147 residues: Large ribosomal subunit protein uL13 (147 aa).

Belongs to the universal ribosomal protein uL13 family. In terms of assembly, part of the 50S ribosomal subunit.

Its function is as follows. This protein is one of the early assembly proteins of the 50S ribosomal subunit, although it is not seen to bind rRNA by itself. It is important during the early stages of 50S assembly. The sequence is that of Large ribosomal subunit protein uL13 from Renibacterium salmoninarum (strain ATCC 33209 / DSM 20767 / JCM 11484 / NBRC 15589 / NCIMB 2235).